The chain runs to 222 residues: N-acetyltransferase 8B (222 aa).

Residues 1–42 (MVSYHICEYQDSDYKSVVDVFTKGAEEYIPSTFRHLLLLPRT) lie on the Cytoplasmic side of the membrane. A helical; Signal-anchor for type II membrane protein membrane pass occupies residues 43–67 (LLLLLGVSLALVLVSGSWLLAVVCI). The 156-residue stretch at 62 to 217 (LAVVCIFFLL…VGIRFVQLNY (156 aa)) folds into the N-acetyltransferase domain. Over 68 to 222 (FFLLPFLWFL…VQLNYSFPSA (155 aa)) the chain is Lumenal. Lys99 carries the post-translational modification N6-acetyllysine.

Belongs to the NAT8 family. In terms of processing, acetylation on Lys-99 modulates enzymatic activity.

The protein resides in the endoplasmic reticulum-Golgi intermediate compartment membrane. The protein localises to the endoplasmic reticulum membrane. The catalysed reaction is L-lysyl-[protein] + acetyl-CoA = N(6)-acetyl-L-lysyl-[protein] + CoA + H(+). Its function is as follows. Endoplasmic reticulum (ER)-membrane-bound lysine N-acetyltransferase catalyzing the N6-acetylation of lysine residues in the lumen of the ER in various proteins, including PROM1 and BACE1, using acetyl-CoA as acetyl donor. Thereby, may regulate apoptosis through the acetylation and the regulation of the expression of PROM1. Acetylates and stabilizes BACE1 immature protein, leading to increased steady-state levels in neurons. By acting on BACE1 expression, may regulate amyloid beta-peptide formation. N(6)-lysine acetylation in ER maintains protein homeostasis and regulates reticulophagy. This Rattus norvegicus (Rat) protein is N-acetyltransferase 8B.